We begin with the raw amino-acid sequence, 440 residues long: Branched-chain amino acid permease BrnQ (440 aa).

12 helical membrane-spanning segments follow: residues 9-29, 46-66, 80-100, 121-141, 149-169, 196-216, 227-247, 284-304, 321-341, 348-368, 378-398, and 414-434; these read YIII…NLIF, AGFL…FVFS, PVFG…FFAI, SPVS…LLSL, IVGK…VAVA, GYLT…VNAL, LIVV…VMYT, ILLG…LITA, IAVV…TQLI, LLTM…HSVF, SLLF…GIKI, and IGLG…ILSI.

It belongs to the branched chain amino acid transporter family.

The protein localises to the cell membrane. Functionally, branched-chain amino acid transport system which is involved in the uptake of isoleucine and valine. Probably does not transport leucine. Together with BcaP and BraB, plays an important role in the activation of CodY, a branched-chain amino acid-responsive transcriptional regulator that controls the expression of several dozen transcription units in B.subtilis. The chain is Branched-chain amino acid permease BrnQ from Bacillus subtilis (strain 168).